A 1155-amino-acid polypeptide reads, in one-letter code: uncharacterized protein (1155 aa).

The N-terminal stretch at 1–19 (MNKNIFITLLISSLLLLSG) is a signal peptide. The N-palmitoyl cysteine moiety is linked to residue Cys20. Residue Cys20 is the site of S-diacylglycerol cysteine attachment. The next 4 membrane-spanning stretches (helical) occupy residues 291 to 311 (VSAI…IGNI), 395 to 415 (LGFI…FLIF), 424 to 444 (ALIT…FMLF), and 459 to 479 (ISYA…SMII).

The protein belongs to the TrbL/VirB6 family.

The protein resides in the cell membrane. This is an uncharacterized protein from Rickettsia felis (strain ATCC VR-1525 / URRWXCal2) (Rickettsia azadi).